A 984-amino-acid chain; its full sequence is Ephrin type-A receptor 3 (984 aa).

The first 20 residues, 1-20 (MDCHLSILILFGCCVLSCSR), serve as a signal peptide directing secretion. The Extracellular portion of the chain corresponds to 21–541 (ELSPQPSNEV…SFSISGENSH (521 aa)). Positions 29–207 (EVNLLDSKTI…YFKKCPFTVK (179 aa)) constitute an Eph LBD domain. N-linked (GlcNAc...) asparagine glycans are attached at residues Asn-232, Asn-337, Asn-391, Asn-404, and Asn-493. Fibronectin type-III domains are found at residues 325–435 (PPSA…TNQA) and 436–532 (APSP…SPDS). Residues 542 to 565 (VVMIAISAAVAIIVLTVVTYVLVG) traverse the membrane as a helical segment. Residues 566–984 (RFCGYHKSKH…TQSKNGPVPV (419 aa)) lie on the Cytoplasmic side of the membrane. A phosphotyrosine; by autocatalysis mark is found at Tyr-597 and Tyr-603. Residues 622 to 883 (IAIDKVVGAG…QIVSILDKLI (262 aa)) enclose the Protein kinase domain. ATP-binding positions include 629-634 (GAGEFG), Lys-654, and 701-707 (EYMENGS). Tyr-702 is modified (phosphotyrosine; by autocatalysis). Asp-747 acts as the Proton acceptor in catalysis. Residue 751–752 (RN) coordinates ATP. Tyr-780 carries the post-translational modification Phosphotyrosine; by autocatalysis. An SAM domain is found at 912–976 (ATFHTTGDWL…ISSIKALETQ (65 aa)). Position 938 is a phosphotyrosine (Tyr-938). Positions 982–984 (VPV) match the PDZ-binding motif.

The protein belongs to the protein kinase superfamily. Tyr protein kinase family. Ephrin receptor subfamily. Heterotetramer upon binding of the ligand. The heterotetramer is composed of an ephrin dimer and a receptor dimer. Oligomerization is probably required to induce biological responses. Forms a ternary EFNA5-EPHA3-ADAM10 complex mediating EFNA5 extracellular domain shedding by ADAM10 which regulates the EFNA5-EPHA3 complex internalization and function. Interacts (phosphorylated) with PTPN1; dephosphorylates EPHA3 and may regulate its trafficking and function. Interacts (phosphorylated) with CRK; mediates EFNA5-EPHA3 signaling through RHOA GTPase activation. Interacts with NCK1 (via SH2 domain); mediates EFNA5-EPHA3 signaling. Autophosphorylates upon activation by EFNA5. Phosphorylation on Tyr-603 mediates interaction with NCK1. Dephosphorylated by PTPN1. Most abundant in the heart, brain and lung.

It is found in the cell membrane. The catalysed reaction is L-tyrosyl-[protein] + ATP = O-phospho-L-tyrosyl-[protein] + ADP + H(+). Functionally, receptor tyrosine kinase which binds promiscuously membrane-bound ephrin family ligands residing on adjacent cells, leading to contact-dependent bidirectional signaling into neighboring cells. The signaling pathway downstream of the receptor is referred to as forward signaling while the signaling pathway downstream of the ephrin ligand is referred to as reverse signaling. Highly promiscuous for ephrin-A ligands it binds preferentially EFNA5. Upon activation by EFNA5 regulates cell-cell adhesion, cytoskeletal organization and cell migration. Plays a role in cardiac cells migration and differentiation and regulates the formation of the atrioventricular canal and septum during development probably through activation by EFNA1. Involved in the retinotectal mapping of neurons. May also control the segregation but not the guidance of motor and sensory axons during neuromuscular circuit development. In Rattus norvegicus (Rat), this protein is Ephrin type-A receptor 3 (Epha3).